The sequence spans 303 residues: UDP-3-O-acyl-N-acetylglucosamine deacetylase (303 aa).

The Zn(2+) site is built by H78, H237, and D241. H264 (proton donor) is an active-site residue.

This sequence belongs to the LpxC family. It depends on Zn(2+) as a cofactor.

It catalyses the reaction a UDP-3-O-[(3R)-3-hydroxyacyl]-N-acetyl-alpha-D-glucosamine + H2O = a UDP-3-O-[(3R)-3-hydroxyacyl]-alpha-D-glucosamine + acetate. It functions in the pathway glycolipid biosynthesis; lipid IV(A) biosynthesis; lipid IV(A) from (3R)-3-hydroxytetradecanoyl-[acyl-carrier-protein] and UDP-N-acetyl-alpha-D-glucosamine: step 2/6. Its function is as follows. Catalyzes the hydrolysis of UDP-3-O-myristoyl-N-acetylglucosamine to form UDP-3-O-myristoylglucosamine and acetate, the committed step in lipid A biosynthesis. This is UDP-3-O-acyl-N-acetylglucosamine deacetylase from Pseudomonas entomophila (strain L48).